Consider the following 278-residue polypeptide: Undecaprenyl-diphosphatase (278 aa).

6 helical membrane passes run 49–69 (ANTF…VVFW), 97–117 (HVLI…DFID), 120–140 (LFSI…MIAA), 197–217 (ADFT…LSLV), 226–246 (GDLG…LLSI), and 258–278 (LVPF…IVYM).

This sequence belongs to the UppP family.

It is found in the cell membrane. It carries out the reaction di-trans,octa-cis-undecaprenyl diphosphate + H2O = di-trans,octa-cis-undecaprenyl phosphate + phosphate + H(+). Its function is as follows. Catalyzes the dephosphorylation of undecaprenyl diphosphate (UPP). Confers resistance to bacitracin. This is Undecaprenyl-diphosphatase from Exiguobacterium sibiricum (strain DSM 17290 / CCUG 55495 / CIP 109462 / JCM 13490 / 255-15).